A 278-amino-acid chain; its full sequence is MDTELLKTFLEVSRTRHFGRAAEALYLTQSAVSFRIRQLENQLGVNLFTRHRNNIRLTTAGEKLLPYAETLMNTWQAARKEVAHTSRHNEFSIGASASLWECMLNAWLGRLYQLQEPQSGLQFEARIAQRQSLVKQLHERQLDLLITTEAPKMDEFSSQLLGHFTLALYCSSPARKKSELNYLRLEWGPDFQQHETGLIAADEVPVLTTSSAELARQQLSALNGCSWLPVNWANEKGGLHTVADSATLSRPLYAIWLQNSDKYSLICDLLKTDVLDEQ.

In terms of domain architecture, HTH lysR-type spans Met-1–Thr-58. The H-T-H motif DNA-binding region spans Phe-18–Arg-37.

It belongs to the LysR transcriptional regulatory family.

Functionally, negatively regulates the transcription of the flagellar master operon flhDC by binding to the upstream region of the operon. The protein is HTH-type transcriptional regulator HdfR of Salmonella agona (strain SL483).